Here is a 293-residue protein sequence, read N- to C-terminus: Urease accessory protein UreD 2 (293 aa).

The protein belongs to the UreD family. As to quaternary structure, ureD, UreF and UreG form a complex that acts as a GTP-hydrolysis-dependent molecular chaperone, activating the urease apoprotein by helping to assemble the nickel containing metallocenter of UreC. The UreE protein probably delivers the nickel.

It is found in the cytoplasm. Its function is as follows. Required for maturation of urease via the functional incorporation of the urease nickel metallocenter. This chain is Urease accessory protein UreD 2, found in Streptomyces griseus subsp. griseus (strain JCM 4626 / CBS 651.72 / NBRC 13350 / KCC S-0626 / ISP 5235).